Reading from the N-terminus, the 267-residue chain is Trehalose-phosphate phosphatase (267 aa).

Catalysis depends on aspartate 20, which acts as the Nucleophile. Aspartate 20, aspartate 22, and aspartate 198 together coordinate Mg(2+). 20–22 (DLD) contributes to the substrate binding site.

This sequence belongs to the trehalose phosphatase family. Mg(2+) is required as a cofactor.

It carries out the reaction alpha,alpha-trehalose 6-phosphate + H2O = alpha,alpha-trehalose + phosphate. Its pathway is glycan biosynthesis; trehalose biosynthesis. Its function is as follows. Removes the phosphate from trehalose 6-phosphate to produce free trehalose. The protein is Trehalose-phosphate phosphatase (otsB) of Salmonella typhimurium (strain SL1344).